A 60-amino-acid chain; its full sequence is Metallothionein (60 aa).

The interval 1–28 is beta; that stretch reads MDPCDCAKTGTCNCGTSCTCANCSCTKC. The a divalent metal cation site is built by Cys4, Cys6, Cys12, Cys14, Cys18, Cys20, Cys23, Cys25, Cys28, Cys32, Cys33, Cys35, Cys36, Cys40, Cys43, Cys47, Cys49, Cys54, Cys58, and Cys59. Residues 29 to 60 form an alpha region; it reads KKSCCECCPSGCSKCASGCACKDKTCDTNCCQ.

This sequence belongs to the metallothionein superfamily. Type 1 family.

In terms of biological role, metallothioneins have a high content of cysteine residues that bind various heavy metals. The polypeptide is Metallothionein (mt) (Gadus morhua (Atlantic cod)).